A 397-amino-acid chain; its full sequence is ATP-dependent RNA helicase eIF4A (397 aa).

The Q motif signature appears at 23-51; sequence YKFDDLNLKPNIVRGIFGYGYETPSAIQQ. Positions 54 to 224 constitute a Helicase ATP-binding domain; the sequence is ILPITEGRDV…TKFMNNPVRI (171 aa). ATP is bound at residue 67–74; sequence AQSGTGKT. The DEAD box motif lies at 172–175; sequence DEAD. The Helicase C-terminal domain maps to 235 to 396; the sequence is GIKQFYINVE…EMPADIGALF (162 aa).

The protein belongs to the DEAD box helicase family. eIF4A subfamily. Component of the eIF4F complex, which composition varies with external and internal environmental conditions. It is composed of at least eIF4A, eIF4E and eIF4G.

It localises to the cytoplasm. The enzyme catalyses ATP + H2O = ADP + phosphate + H(+). Its function is as follows. ATP-dependent RNA helicase which is a subunit of the eIF4F complex involved in cap recognition and is required for mRNA binding to ribosome. In the current model of translation initiation, eIF4A unwinds RNA secondary structures in the 5'-UTR of mRNAs which is necessary to allow efficient binding of the small ribosomal subunit, and subsequent scanning for the initiator codon. This chain is ATP-dependent RNA helicase eIF4A (TIF1), found in Candida albicans (strain SC5314 / ATCC MYA-2876) (Yeast).